A 147-amino-acid polypeptide reads, in one-letter code: UPF0306 protein YhbP (147 aa).

This sequence belongs to the UPF0306 family.

This Salmonella schwarzengrund (strain CVM19633) protein is UPF0306 protein YhbP.